A 374-amino-acid chain; its full sequence is Pectinesterase (374 aa).

The N-terminal stretch at 1 to 31 (MVKLLNSTRELSINALSMLNSFGDMVAQATG) is a signal peptide. N-linked (GlcNAc...) asparagine glycans are attached at residues asparagine 58 and asparagine 124. Substrate is bound by residues threonine 133 and glutamine 163. The Proton donor role is filled by aspartate 186. The cysteines at positions 200 and 220 are disulfide-linked. The active-site Nucleophile is aspartate 207. Asparagine 230 carries an N-linked (GlcNAc...) asparagine glycan. The substrate site is built by arginine 275 and tryptophan 277. A glycan (N-linked (GlcNAc...) asparagine) is linked at asparagine 303.

This sequence belongs to the pectinesterase family. In terms of tissue distribution, pollen, and at much lower levels in pistils and petals.

It is found in the secreted. It localises to the cell wall. The enzyme catalyses [(1-&gt;4)-alpha-D-galacturonosyl methyl ester](n) + n H2O = [(1-&gt;4)-alpha-D-galacturonosyl](n) + n methanol + n H(+). It functions in the pathway glycan metabolism; pectin degradation; 2-dehydro-3-deoxy-D-gluconate from pectin: step 1/5. May play a role in pollen germination and/or tube growth. This Petunia integrifolia (Violet-flowered petunia) protein is Pectinesterase (PPE1).